A 178-amino-acid chain; its full sequence is Fatty-acid and retinol-binding protein 1 (178 aa).

The first 16 residues, 1 to 16 (MYHRLILLALVGTTMA), serve as a signal peptide directing secretion. 2 coiled-coil regions span residues 67–89 (DAALEALKDKSDKLYKNAVELRN) and 130–153 (KQAARDIIAKYQALSEETKEELKV).

The protein belongs to the fatty-acid and retinol-binding protein (FARBP) family. Post-translationally, not glycosylated.

It is found in the secreted. Its function is as follows. Binds retinol. Also binds the fluorescent fatty acid 11-((5-dimethylaminonaphthalene-1-sulfonyl)amino)undecanoic acid (DAUDA). The long chain fatty acid oleic acid can act competitively to displace bound DAUDA and retinol. In Brugia malayi (Filarial nematode worm), this protein is Fatty-acid and retinol-binding protein 1.